The following is a 302-amino-acid chain: Putative peptide permease protein BMEII0861 (302 aa).

The tract at residues 1-22 (MRSSIHASRLRKMGQSIPASTG) is disordered. The next 5 helical transmembrane spans lie at 38–58 (IFGLVLLTPLLFAVLTYPLWL), 101–121 (LLVAVSSVVLSTAIGFLIGAI), 147–167 (IFLLVLASIIGSGIWSTVVVI), 230–250 (ILLEAGLSFLGLGVPPPAASW), and 268–288 (WQWLFPGGALVLAVLAINFIG). The 192-residue stretch at 97–288 (GRISLLVAVS…LAVLAINFIG (192 aa)) folds into the ABC transmembrane type-1 domain.

It belongs to the binding-protein-dependent transport system permease family. The complex is composed of two ATP-binding proteins (BMEII0863 and BMEII0864), two transmembrane proteins (BMEII0860 and BMEII0861) and a solute-binding protein (BMEII0859).

The protein localises to the cell inner membrane. Probably part of an ABC transporter complex that could be involved in peptide import. Probably responsible for the translocation of the substrate across the membrane. This chain is Putative peptide permease protein BMEII0861, found in Brucella melitensis biotype 1 (strain ATCC 23456 / CCUG 17765 / NCTC 10094 / 16M).